A 268-amino-acid chain; its full sequence is tRNA (guanine-N(1)-)-methyltransferase (268 aa).

S-adenosyl-L-methionine is bound by residues G113 and 133-138 (IGDYVL). Residues 238–268 (RCPPDPFAHQGPVYEGDQLERPEGGEQGASR) form a disordered region.

Belongs to the RNA methyltransferase TrmD family. In terms of assembly, homodimer.

It localises to the cytoplasm. It carries out the reaction guanosine(37) in tRNA + S-adenosyl-L-methionine = N(1)-methylguanosine(37) in tRNA + S-adenosyl-L-homocysteine + H(+). Functionally, specifically methylates guanosine-37 in various tRNAs. This Thermomicrobium roseum (strain ATCC 27502 / DSM 5159 / P-2) protein is tRNA (guanine-N(1)-)-methyltransferase.